The chain runs to 1122 residues: Histidine kinase CKI1 (1122 aa).

Over 1 to 12 (MMVKVTKLVASR) the chain is Cytoplasmic. Residues 13-33 (PIVVFCVLAFLVVVFECIWIS) traverse the membrane as a helical segment. Topologically, residues 34–345 (NWRTTTENLV…KHQAEKAKYQ (312 aa)) are extracellular. Residues 346 to 366 (LIVVMIFLGFGWPVWFVWFMM) traverse the membrane as a helical segment. The Cytoplasmic segment spans residues 367 to 1122 (QATRREMHMR…VIREIESKRH (756 aa)). The 270-residue stretch at 402–671 (NASHDIRGAL…CFQFNVLLTT (270 aa)) folds into the Histidine kinase domain. The residue at position 405 (histidine 405) is a Phosphohistidine; by autocatalysis. Over residues 918 to 928 (AERSPKHKVQE) the composition is skewed to basic and acidic residues. Residues 918–981 (AERSPKHKVQ…QETSKPSDDE (64 aa)) form a disordered region. A Response regulatory domain is found at 987–1120 (RVLVVDDNFI…ANVIREIESK (134 aa)). Aspartate 1050 bears the 4-aspartylphosphate mark.

In terms of assembly, homodimer. Interacts with AHP2 and AHP3. As to expression, expressed in vascular tissues of inflorescence stems and floral organs, especially in procambium cells, and in siliques.

The protein localises to the cell membrane. The catalysed reaction is ATP + protein L-histidine = ADP + protein N-phospho-L-histidine.. In terms of biological role, essential protein. Functions as a histidine kinase and transmits the stress signal to a downstream MAPK cascade. This protein undergoes an ATP-dependent autophosphorylation at a conserved histidine residue in the kinase core, and a phosphoryl group is then transferred to a conserved aspartate residue in the receiver domain. Required for the development of megagametophyte in female gametophyte (embryo sac) independently of cytokinin. Contributes to vascular bundle formation and secondary growth in a cytokinin-independent manner, probably by promoting the maintenance of mitotic activity and/or identity of procambial cells. Seems to influence and promote the cytokinin signaling pathway. This Arabidopsis thaliana (Mouse-ear cress) protein is Histidine kinase CKI1 (CKI1).